Reading from the N-terminus, the 197-residue chain is 3-isopropylmalate dehydratase small subunit (197 aa).

This sequence belongs to the LeuD family. LeuD type 1 subfamily. In terms of assembly, heterodimer of LeuC and LeuD.

The enzyme catalyses (2R,3S)-3-isopropylmalate = (2S)-2-isopropylmalate. Its pathway is amino-acid biosynthesis; L-leucine biosynthesis; L-leucine from 3-methyl-2-oxobutanoate: step 2/4. Its function is as follows. Catalyzes the isomerization between 2-isopropylmalate and 3-isopropylmalate, via the formation of 2-isopropylmaleate. This is 3-isopropylmalate dehydratase small subunit from Streptococcus suis (strain 98HAH33).